We begin with the raw amino-acid sequence, 979 residues long: Translation initiation factor IF-2 (979 aa).

The span at 50–77 shows a compositional bias: basic and acidic residues; that stretch reads LKRSHGQSDDSARKKITLTKRETSEIRQ. The disordered stretch occupies residues 50–385; it reads LKRSHGQSDD…GKHNADDARS (336 aa). Polar residues predominate over residues 78-87; the sequence is SDSTGKTRTV. Composition is skewed to basic and acidic residues over residues 98 to 109, 121 to 142, and 149 to 173; these read IKRDDVESHGDG, EEVR…RQEA, and EAAE…RRQA. Low complexity predominate over residues 174–192; the sequence is ELLAQKAAEEAAAAQAAAD. Composition is skewed to basic and acidic residues over residues 196–211, 219–263, and 280–291; these read ETAR…RLAT, NADD…EAEA, and PSERKAEEKKAE. Residues 317–327 show a composition bias toward low complexity; sequence APAATTTTAAA. The span at 351-368 shows a compositional bias: gly residues; it reads GGGLKTRGDSSGGVGGWR. One can recognise a tr-type G domain in the interval 479 to 646; it reads PRPPVVTVMG…NVLLQAEVLE (168 aa). Residues 488 to 495 form a G1 region; sequence GHVDHGKT. 488–495 contacts GTP; it reads GHVDHGKT. The G2 stretch occupies residues 513–517; sequence GITQH. The segment at 534-537 is G3; that stretch reads DTPG. Residues 534–538 and 588–591 contribute to the GTP site; these read DTPGH and TKVD. The interval 588–591 is G4; that stretch reads TKVD. The segment at 624–626 is G5; the sequence is SAK.

This sequence belongs to the TRAFAC class translation factor GTPase superfamily. Classic translation factor GTPase family. IF-2 subfamily.

The protein resides in the cytoplasm. Its function is as follows. One of the essential components for the initiation of protein synthesis. Protects formylmethionyl-tRNA from spontaneous hydrolysis and promotes its binding to the 30S ribosomal subunits. Also involved in the hydrolysis of GTP during the formation of the 70S ribosomal complex. The sequence is that of Translation initiation factor IF-2 from Cupriavidus metallidurans (strain ATCC 43123 / DSM 2839 / NBRC 102507 / CH34) (Ralstonia metallidurans).